The following is a 301-amino-acid chain: Prohibitin-2 (301 aa).

Necessary for transcriptional repression stretches follow at residues 19 to 49 (MGTA…GHRA) and 150 to 174 (ASQL…RAKD). Positions 191–237 (REYTAAVESKQVAQQEAQRAQFLVEKAKQDQKQKIVQAEGEAAAAKM) form a coiled coil.

Belongs to the prohibitin family. As to quaternary structure, the mitochondrial prohibitin complex consists of two subunits (PHB1 and PHB2), assembled into a membrane-associated ring-shaped supercomplex of approximately 1 mDa.

It localises to the mitochondrion inner membrane. Its subcellular location is the cytoplasm. It is found in the nucleus. The protein localises to the cell membrane. In terms of biological role, protein with pleiotropic attributes mediated in a cell-compartment- and tissue-specific manner, which include the plasma membrane-associated cell signaling functions, mitochondrial chaperone, and transcriptional co-regulator of transcription factors and sex steroid hormones in the nucleus. In the mitochondria, together with PHB, forms large ring complexes (prohibitin complexes) in the inner mitochondrial membrane (IMM) and functions as a chaperone protein that stabilizes mitochondrial respiratory enzymes and maintains mitochondrial integrity in the IMM, which is required for mitochondrial morphogenesis, neuronal survival, and normal lifespan. Its function is as follows. In the nucleus, serves as transcriptional co-regulator. This chain is Prohibitin-2 (phb2), found in Xenopus tropicalis (Western clawed frog).